A 115-amino-acid polypeptide reads, in one-letter code: Phosphoribosyl-AMP cyclohydrolase (115 aa).

Aspartate 80 contributes to the Mg(2+) binding site. Cysteine 81 lines the Zn(2+) pocket. Mg(2+)-binding residues include aspartate 82 and aspartate 84. Zn(2+)-binding residues include cysteine 97 and cysteine 104.

The protein belongs to the PRA-CH family. Homodimer. Mg(2+) serves as cofactor. Zn(2+) is required as a cofactor.

It localises to the cytoplasm. It catalyses the reaction 1-(5-phospho-beta-D-ribosyl)-5'-AMP + H2O = 1-(5-phospho-beta-D-ribosyl)-5-[(5-phospho-beta-D-ribosylamino)methylideneamino]imidazole-4-carboxamide. Its pathway is amino-acid biosynthesis; L-histidine biosynthesis; L-histidine from 5-phospho-alpha-D-ribose 1-diphosphate: step 3/9. Its function is as follows. Catalyzes the hydrolysis of the adenine ring of phosphoribosyl-AMP. The polypeptide is Phosphoribosyl-AMP cyclohydrolase (Mycobacterium bovis (strain ATCC BAA-935 / AF2122/97)).